The sequence spans 269 residues: Putative phosphatase M6_Spy0533 (269 aa).

The Nucleophile role is filled by Asp-9. Mg(2+) is bound at residue Asp-9. Position 10 (Ile-10) interacts with phosphate. Asp-11 is a binding site for Mg(2+). Residues 43 to 44 (TG) and Lys-196 each bind phosphate. Asp-219 is a Mg(2+) binding site. Asn-222 contacts phosphate.

The cofactor is Mg(2+).

The sequence is that of Putative phosphatase M6_Spy0533 from Streptococcus pyogenes serotype M6 (strain ATCC BAA-946 / MGAS10394).